The chain runs to 698 residues: Methionine--tRNA ligase (698 aa).

The short motif at 21-31 (PYANGPLHFGH) is the 'HIGH' region element. Residues Cys153, Cys156, Cys166, and Cys169 each contribute to the Zn(2+) site. The short motif at 341-345 (QFSKS) is the 'KMSKS' region element. ATP is bound at residue Lys344. A tRNA-binding domain is found at 599 to 698 (DFRKLDLRVG…EDVAPGSLVS (100 aa)).

The protein belongs to the class-I aminoacyl-tRNA synthetase family. MetG type 1 subfamily. In terms of assembly, homodimer. Requires Zn(2+) as cofactor.

The protein localises to the cytoplasm. It carries out the reaction tRNA(Met) + L-methionine + ATP = L-methionyl-tRNA(Met) + AMP + diphosphate. Its function is as follows. Is required not only for elongation of protein synthesis but also for the initiation of all mRNA translation through initiator tRNA(fMet) aminoacylation. The sequence is that of Methionine--tRNA ligase from Protochlamydia amoebophila (strain UWE25).